Here is a 329-residue protein sequence, read N- to C-terminus: 2,3,4,5-tetrahydropyridine-2,6-dicarboxylate N-succinyltransferase (329 aa).

The Mg(2+) site is built by Asp-177 and Glu-194. The Acyl-anhydride intermediate role is filled by Glu-210. Residues Arg-212, Gly-227, Ser-230, Ala-253, 268-269, Gly-276, Lys-288, and 301-304 each bind succinyl-CoA; these read EA and RRNS.

Belongs to the type 2 tetrahydrodipicolinate N-succinyltransferase family. Homotrimer.

The protein localises to the cytoplasm. It carries out the reaction (S)-2,3,4,5-tetrahydrodipicolinate + succinyl-CoA + H2O = (S)-2-succinylamino-6-oxoheptanedioate + CoA. Its pathway is amino-acid biosynthesis; L-lysine biosynthesis via DAP pathway; LL-2,6-diaminopimelate from (S)-tetrahydrodipicolinate (succinylase route): step 1/3. Functionally, catalyzes the conversion of the cyclic tetrahydrodipicolinate (THDP) into the acyclic N-succinyl-L-2-amino-6-oxopimelate using succinyl-CoA. In Streptomyces coelicolor (strain ATCC BAA-471 / A3(2) / M145), this protein is 2,3,4,5-tetrahydropyridine-2,6-dicarboxylate N-succinyltransferase.